A 306-amino-acid chain; its full sequence is Protoheme IX farnesyltransferase (306 aa).

8 consecutive transmembrane segments (helical) span residues valine 31 to tryptophan 50, leucine 55 to isoleucine 77, leucine 104 to tryptophan 124, leucine 125 to leucine 145, tryptophan 168 to leucine 188, glycine 218 to alanine 235, leucine 238 to glycine 258, and alanine 286 to phenylalanine 306.

This sequence belongs to the UbiA prenyltransferase family. Protoheme IX farnesyltransferase subfamily.

Its subcellular location is the cell membrane. It carries out the reaction heme b + (2E,6E)-farnesyl diphosphate + H2O = Fe(II)-heme o + diphosphate. It participates in porphyrin-containing compound metabolism; heme O biosynthesis; heme O from protoheme: step 1/1. Converts heme B (protoheme IX) to heme O by substitution of the vinyl group on carbon 2 of heme B porphyrin ring with a hydroxyethyl farnesyl side group. This chain is Protoheme IX farnesyltransferase, found in Clavibacter michiganensis subsp. michiganensis (strain NCPPB 382).